We begin with the raw amino-acid sequence, 258 residues long: Imidazole glycerol phosphate synthase subunit HisF (258 aa).

Residues Asp-11 and Asp-130 contribute to the active site.

Belongs to the HisA/HisF family. In terms of assembly, heterodimer of HisH and HisF.

The protein resides in the cytoplasm. The catalysed reaction is 5-[(5-phospho-1-deoxy-D-ribulos-1-ylimino)methylamino]-1-(5-phospho-beta-D-ribosyl)imidazole-4-carboxamide + L-glutamine = D-erythro-1-(imidazol-4-yl)glycerol 3-phosphate + 5-amino-1-(5-phospho-beta-D-ribosyl)imidazole-4-carboxamide + L-glutamate + H(+). It participates in amino-acid biosynthesis; L-histidine biosynthesis; L-histidine from 5-phospho-alpha-D-ribose 1-diphosphate: step 5/9. Functionally, IGPS catalyzes the conversion of PRFAR and glutamine to IGP, AICAR and glutamate. The HisF subunit catalyzes the cyclization activity that produces IGP and AICAR from PRFAR using the ammonia provided by the HisH subunit. In Baumannia cicadellinicola subsp. Homalodisca coagulata, this protein is Imidazole glycerol phosphate synthase subunit HisF.